A 101-amino-acid chain; its full sequence is Omega-scoloptoxin(10)-Ssd1b (101 aa).

Residues 1 to 23 (MNKLTIIFFTILLLTYIIVEKEA) form the signal peptide.

Post-translationally, contains 3 disulfide bonds. As to expression, expressed by the venom gland.

The protein resides in the secreted. Its function is as follows. Voltage-gated calcium channel inhibitor. This chain is Omega-scoloptoxin(10)-Ssd1b, found in Scolopendra dehaani (Thai centipede).